We begin with the raw amino-acid sequence, 72 residues long: Translation initiation factor IF-1 (72 aa).

In terms of domain architecture, S1-like spans 1-72; sequence MAKEDNIEMQ…SKGRIVFRAR (72 aa).

The protein belongs to the IF-1 family. In terms of assembly, component of the 30S ribosomal translation pre-initiation complex which assembles on the 30S ribosome in the order IF-2 and IF-3, IF-1 and N-formylmethionyl-tRNA(fMet); mRNA recruitment can occur at any time during PIC assembly.

The protein resides in the cytoplasm. One of the essential components for the initiation of protein synthesis. Stabilizes the binding of IF-2 and IF-3 on the 30S subunit to which N-formylmethionyl-tRNA(fMet) subsequently binds. Helps modulate mRNA selection, yielding the 30S pre-initiation complex (PIC). Upon addition of the 50S ribosomal subunit IF-1, IF-2 and IF-3 are released leaving the mature 70S translation initiation complex. The chain is Translation initiation factor IF-1 from Shewanella frigidimarina (strain NCIMB 400).